The primary structure comprises 257 residues: tRNA (guanine-N(1)-)-methyltransferase (257 aa).

S-adenosyl-L-methionine contacts are provided by residues Gly-117 and 137-142; that span reads LGDFVL.

The protein belongs to the RNA methyltransferase TrmD family. As to quaternary structure, homodimer.

It localises to the cytoplasm. The catalysed reaction is guanosine(37) in tRNA + S-adenosyl-L-methionine = N(1)-methylguanosine(37) in tRNA + S-adenosyl-L-homocysteine + H(+). In terms of biological role, specifically methylates guanosine-37 in various tRNAs. The chain is tRNA (guanine-N(1)-)-methyltransferase from Bordetella parapertussis (strain 12822 / ATCC BAA-587 / NCTC 13253).